The sequence spans 379 residues: Cytochrome b (379 aa).

4 consecutive transmembrane segments (helical) span residues 33–53 (FGSL…FLAM), 77–98 (WLIR…YLHI), 113–133 (WNIG…GYVL), and 178–198 (FFAF…IHFF). 2 residues coordinate heme b: H83 and H97. 2 residues coordinate heme b: H182 and H196. H201 is an a ubiquinone binding site. Helical transmembrane passes span 226-246 (IKDI…VLFS), 288-308 (LGGV…PMLH), 320-340 (FSQC…WIGG), and 347-367 (YITI…IVSR).

The protein belongs to the cytochrome b family. The cytochrome bc1 complex contains 11 subunits: 3 respiratory subunits (MT-CYB, CYC1 and UQCRFS1), 2 core proteins (UQCRC1 and UQCRC2) and 6 low-molecular weight proteins (UQCRH/QCR6, UQCRB/QCR7, UQCRQ/QCR8, UQCR10/QCR9, UQCR11/QCR10 and a cleavage product of UQCRFS1). This cytochrome bc1 complex then forms a dimer. Requires heme b as cofactor.

The protein localises to the mitochondrion inner membrane. Its function is as follows. Component of the ubiquinol-cytochrome c reductase complex (complex III or cytochrome b-c1 complex) that is part of the mitochondrial respiratory chain. The b-c1 complex mediates electron transfer from ubiquinol to cytochrome c. Contributes to the generation of a proton gradient across the mitochondrial membrane that is then used for ATP synthesis. In Dolichotis patagonum (Patagonian mara), this protein is Cytochrome b (MT-CYB).